Consider the following 615-residue polypeptide: Isocitrate dehydrogenase kinase/phosphatase (615 aa).

ATP is bound by residues 325 to 331 and lysine 346; that span reads APGIKGM. Residue aspartate 381 is part of the active site.

This sequence belongs to the AceK family.

It is found in the cytoplasm. The catalysed reaction is L-seryl-[isocitrate dehydrogenase] + ATP = O-phospho-L-seryl-[isocitrate dehydrogenase] + ADP + H(+). In terms of biological role, bifunctional enzyme which can phosphorylate or dephosphorylate isocitrate dehydrogenase (IDH) on a specific serine residue. This is a regulatory mechanism which enables bacteria to bypass the Krebs cycle via the glyoxylate shunt in response to the source of carbon. When bacteria are grown on glucose, IDH is fully active and unphosphorylated, but when grown on acetate or ethanol, the activity of IDH declines drastically concomitant with its phosphorylation. The protein is Isocitrate dehydrogenase kinase/phosphatase of Albidiferax ferrireducens (strain ATCC BAA-621 / DSM 15236 / T118) (Rhodoferax ferrireducens).